The primary structure comprises 426 residues: Serine--tRNA ligase (426 aa).

Over residues 41-60 (QTRTEQLQAERNARSKSIGQ) the composition is skewed to polar residues. The segment at 41–64 (QTRTEQLQAERNARSKSIGQAKQR) is disordered. 233-235 (TAE) contributes to the L-serine binding site. 264-266 (RSE) is an ATP binding site. Residue glutamate 287 coordinates L-serine. An ATP-binding site is contributed by 351 to 354 (EISS). An L-serine-binding site is contributed by serine 387.

Belongs to the class-II aminoacyl-tRNA synthetase family. Type-1 seryl-tRNA synthetase subfamily. In terms of assembly, homodimer. The tRNA molecule binds across the dimer.

The protein localises to the cytoplasm. It carries out the reaction tRNA(Ser) + L-serine + ATP = L-seryl-tRNA(Ser) + AMP + diphosphate + H(+). The catalysed reaction is tRNA(Sec) + L-serine + ATP = L-seryl-tRNA(Sec) + AMP + diphosphate + H(+). It functions in the pathway aminoacyl-tRNA biosynthesis; selenocysteinyl-tRNA(Sec) biosynthesis; L-seryl-tRNA(Sec) from L-serine and tRNA(Sec): step 1/1. Catalyzes the attachment of serine to tRNA(Ser). Is also able to aminoacylate tRNA(Sec) with serine, to form the misacylated tRNA L-seryl-tRNA(Sec), which will be further converted into selenocysteinyl-tRNA(Sec). The protein is Serine--tRNA ligase of Pseudomonas fluorescens (strain ATCC BAA-477 / NRRL B-23932 / Pf-5).